The primary structure comprises 487 residues: Cytochrome P450 2C5 (487 aa).

Cysteine 432 serves as a coordination point for heme.

It belongs to the cytochrome P450 family. Heme serves as cofactor.

The protein resides in the endoplasmic reticulum membrane. The protein localises to the microsome membrane. It catalyses the reaction an organic molecule + reduced [NADPH--hemoprotein reductase] + O2 = an alcohol + oxidized [NADPH--hemoprotein reductase] + H2O + H(+). Its function is as follows. Cytochromes P450 are a group of heme-thiolate monooxygenases. In liver microsomes, this enzyme is involved in an NADPH-dependent electron transport pathway. It oxidizes a variety of structurally unrelated compounds, including steroids, fatty acids, and xenobiotics. This chain is Cytochrome P450 2C5 (CYP2C5), found in Oryctolagus cuniculus (Rabbit).